The sequence spans 387 residues: Anhydro-N-acetylmuramic acid kinase (387 aa).

9 to 16 (GTSVDGID) is an ATP binding site.

This sequence belongs to the anhydro-N-acetylmuramic acid kinase family.

The catalysed reaction is 1,6-anhydro-N-acetyl-beta-muramate + ATP + H2O = N-acetyl-D-muramate 6-phosphate + ADP + H(+). The protein operates within amino-sugar metabolism; 1,6-anhydro-N-acetylmuramate degradation. Its pathway is cell wall biogenesis; peptidoglycan recycling. Catalyzes the specific phosphorylation of 1,6-anhydro-N-acetylmuramic acid (anhMurNAc) with the simultaneous cleavage of the 1,6-anhydro ring, generating MurNAc-6-P. Is required for the utilization of anhMurNAc either imported from the medium or derived from its own cell wall murein, and thus plays a role in cell wall recycling. In Synechocystis sp. (strain ATCC 27184 / PCC 6803 / Kazusa), this protein is Anhydro-N-acetylmuramic acid kinase.